Reading from the N-terminus, the 341-residue chain is Peroxisomal membrane protein PEX14 (341 aa).

Position 2 is an N-acetylserine (serine 2). The SH3-binding signature appears at 86-94; the sequence is PPTLPHRDW. Residues 276 to 341 are disordered; the sequence is MQEESDKEKE…QNGQVEDSIP (66 aa). The span at 279–295 shows a compositional bias: basic and acidic residues; that stretch reads ESDKEKENGSDANKDDN. Over residues 308-341 the composition is skewed to polar residues; that stretch reads IDSNASIPEWQKNTAANEISVPDWQNGQVEDSIP. Serine 313 is modified (phosphoserine).

It belongs to the peroxin-14 family. As to quaternary structure, interacts with PEX13 (via SH3 domain); forming the PEX13-PEX14 docking complex. Interacts with PEX5 (via WxxxF/Y motifs). Interacts with PEX7. Interacts with PEX9.

The protein resides in the peroxisome membrane. Functionally, component of the PEX13-PEX14 docking complex, a translocon channel that specifically mediates the import of peroxisomal cargo proteins bound to PEX5 or PEX21 receptors. The PEX13-PEX14 docking complex forms a large import pore which can be opened to a diameter of about 9 nm. Mechanistically, PEX5 (or PEX21) receptor along with cargo proteins associates with the PEX14 subunit of the PEX13-PEX14 docking complex in the cytosol, leading to the insertion of the receptor into the organelle membrane with the concomitant translocation of the cargo into the peroxisome matrix. The sequence is that of Peroxisomal membrane protein PEX14 from Saccharomyces cerevisiae (strain ATCC 204508 / S288c) (Baker's yeast).